The primary structure comprises 882 residues: Valine--tRNA ligase (882 aa).

The 'HIGH' region signature appears at 52–62 (PNVTGSLHMGH). The 'KMSKS' region signature appears at 539–543 (KMSKS). An ATP-binding site is contributed by Lys-542. Positions 816 to 882 (IDVAAERRRL…RINARLAVLQ (67 aa)) form a coiled coil.

Belongs to the class-I aminoacyl-tRNA synthetase family. ValS type 1 subfamily. Monomer.

It localises to the cytoplasm. The enzyme catalyses tRNA(Val) + L-valine + ATP = L-valyl-tRNA(Val) + AMP + diphosphate. Catalyzes the attachment of valine to tRNA(Val). As ValRS can inadvertently accommodate and process structurally similar amino acids such as threonine, to avoid such errors, it has a 'posttransfer' editing activity that hydrolyzes mischarged Thr-tRNA(Val) in a tRNA-dependent manner. The polypeptide is Valine--tRNA ligase (Mycolicibacterium paratuberculosis (strain ATCC BAA-968 / K-10) (Mycobacterium paratuberculosis)).